The primary structure comprises 147 residues: Hemoglobin subunit beta (147 aa).

Residues 2 to 147 (DWTDAERAAI…VVSALGRQYH (146 aa)) enclose the Globin domain. Residues His-63 and His-92 each contribute to the heme b site.

Belongs to the globin family. Heterotetramer of two alpha chains and two beta chains. As to expression, red blood cells.

Its function is as follows. Involved in oxygen transport from gills to the various peripheral tissues. The protein is Hemoglobin subunit beta (hbb) of Leiostomus xanthurus (Spot).